Reading from the N-terminus, the 278-residue chain is Undecaprenyl-diphosphatase (278 aa).

Transmembrane regions (helical) follow at residues 3 to 23 (YILI…IPIS), 42 to 62 (VAYS…IIYF), 88 to 108 (FLVI…LFVI), 112 to 132 (ILGL…IIIY), 152 to 172 (IIIV…RSGI), 190 to 210 (LSFI…VLFS), 225 to 245 (GLLI…NALL), and 253 to 273 (VVVL…LSGI).

The protein belongs to the UppP family.

It is found in the cell membrane. It carries out the reaction di-trans,octa-cis-undecaprenyl diphosphate + H2O = di-trans,octa-cis-undecaprenyl phosphate + phosphate + H(+). Its function is as follows. Catalyzes the dephosphorylation of undecaprenyl diphosphate (UPP). This is Undecaprenyl-diphosphatase from Saccharolobus islandicus (strain M.16.4 / Kamchatka #3) (Sulfolobus islandicus).